The primary structure comprises 321 residues: Aspartate carbamoyltransferase catalytic subunit (321 aa).

R70 and T71 together coordinate carbamoyl phosphate. K98 is an L-aspartate binding site. The carbamoyl phosphate site is built by R120, H148, and Q151. Residues R181 and R235 each contribute to the L-aspartate site. 2 residues coordinate carbamoyl phosphate: G276 and P277.

It belongs to the aspartate/ornithine carbamoyltransferase superfamily. ATCase family. In terms of assembly, heterododecamer (2C3:3R2) of six catalytic PyrB chains organized as two trimers (C3), and six regulatory PyrI chains organized as three dimers (R2).

The catalysed reaction is carbamoyl phosphate + L-aspartate = N-carbamoyl-L-aspartate + phosphate + H(+). The protein operates within pyrimidine metabolism; UMP biosynthesis via de novo pathway; (S)-dihydroorotate from bicarbonate: step 2/3. Its function is as follows. Catalyzes the condensation of carbamoyl phosphate and aspartate to form carbamoyl aspartate and inorganic phosphate, the committed step in the de novo pyrimidine nucleotide biosynthesis pathway. This chain is Aspartate carbamoyltransferase catalytic subunit, found in Gluconacetobacter diazotrophicus (strain ATCC 49037 / DSM 5601 / CCUG 37298 / CIP 103539 / LMG 7603 / PAl5).